The sequence spans 348 residues: Anthranilate phosphoribosyltransferase (348 aa).

5-phospho-alpha-D-ribose 1-diphosphate-binding positions include Gly83, 86-87, Thr91, 93-96, 111-119, and Thr123; these read GD, NVST, and KHGNRAASS. Gly83 provides a ligand contact to anthranilate. Ser95 provides a ligand contact to Mg(2+). Residue Asn114 participates in anthranilate binding. Arg169 is a binding site for anthranilate. Residues Asp227 and Glu228 each contribute to the Mg(2+) site.

This sequence belongs to the anthranilate phosphoribosyltransferase family. In terms of assembly, homodimer. It depends on Mg(2+) as a cofactor.

It carries out the reaction N-(5-phospho-beta-D-ribosyl)anthranilate + diphosphate = 5-phospho-alpha-D-ribose 1-diphosphate + anthranilate. It functions in the pathway amino-acid biosynthesis; L-tryptophan biosynthesis; L-tryptophan from chorismate: step 2/5. Functionally, catalyzes the transfer of the phosphoribosyl group of 5-phosphorylribose-1-pyrophosphate (PRPP) to anthranilate to yield N-(5'-phosphoribosyl)-anthranilate (PRA). This Thermobifida fusca (strain YX) protein is Anthranilate phosphoribosyltransferase.